Consider the following 641-residue polypeptide: MGKIIGIDLGTTNSCVSIMDGGKARVIENSEGDRTTPSIVAYTKDGEVLVGASAKRQAVTNPKNTFYAVKRLIGRKFTDGEVQKDISHVPYGILAHDNGDAWVQTSDGKRMAPQEISARVLEKMKKTAEDFLGEKVTEAVITVPAYFNDSQRQATKDAGRIAGLDVKRIINEPTAAALAYGLDKNGGDRKIAVYDLGGGTFDVSIIEIAEVDGEKQFEVLATNGDTFLGGEDFDNRVIEYLVDEFNKDQGIDLRKDPLALQRLKDAAERAKIELSSSQQTEVNLPYVTADASGPKHLNIKLTRAKLEALVEDLVKKSIEPCRTALNDAGLRASDINEVILVGGQTRMPKVQQAVADFFGKEPRKDVNPDEAVAVGAAIQGGVLAGDVKDVLLLDVTPLSLGIETMGGVFTKIIEKNTTIPTKASQTFSTAEDNQSAVTVHVLQGEREQARFNKSLAKFDLSGIEPAPRGMPQVEVSFDIDANGILHVSAKDKKTNKEQKVEIKAGSGLSDEEIQRMVADAEANREEDKKFQELVQARNQADGLIHATRTAITEHGSKVGGDVIGKVEAALSDLETAMKGDDKAQIEARTKTLEEAGQSLYAAAAAAEQGGNADAASGNAQASKAADDVVDAEFTEVKDDKK.

The residue at position 200 (Thr200) is a Phosphothreonine; by autocatalysis. Residues 606 to 623 show a composition bias toward low complexity; the sequence is AEQGGNADAASGNAQASK. The tract at residues 606–628 is disordered; the sequence is AEQGGNADAASGNAQASKAADDV.

It belongs to the heat shock protein 70 family.

Functionally, acts as a chaperone. This Xanthomonas axonopodis pv. citri (strain 306) protein is Chaperone protein DnaK.